A 328-amino-acid chain; its full sequence is Lipoyl synthase (328 aa).

Positions 75, 80, 86, 101, 105, 108, and 315 each coordinate [4Fe-4S] cluster. The Radical SAM core domain maps to 87 to 304 (FNHGTATFMI…EREAKKMGYE (218 aa)).

This sequence belongs to the radical SAM superfamily. Lipoyl synthase family. [4Fe-4S] cluster serves as cofactor.

It localises to the cytoplasm. It carries out the reaction [[Fe-S] cluster scaffold protein carrying a second [4Fe-4S](2+) cluster] + N(6)-octanoyl-L-lysyl-[protein] + 2 oxidized [2Fe-2S]-[ferredoxin] + 2 S-adenosyl-L-methionine + 4 H(+) = [[Fe-S] cluster scaffold protein] + N(6)-[(R)-dihydrolipoyl]-L-lysyl-[protein] + 4 Fe(3+) + 2 hydrogen sulfide + 2 5'-deoxyadenosine + 2 L-methionine + 2 reduced [2Fe-2S]-[ferredoxin]. The protein operates within protein modification; protein lipoylation via endogenous pathway; protein N(6)-(lipoyl)lysine from octanoyl-[acyl-carrier-protein]: step 2/2. In terms of biological role, catalyzes the radical-mediated insertion of two sulfur atoms into the C-6 and C-8 positions of the octanoyl moiety bound to the lipoyl domains of lipoate-dependent enzymes, thereby converting the octanoylated domains into lipoylated derivatives. The chain is Lipoyl synthase from Colwellia psychrerythraea (strain 34H / ATCC BAA-681) (Vibrio psychroerythus).